Here is a 201-residue protein sequence, read N- to C-terminus: Small ribosomal subunit protein uS4 (201 aa).

The region spanning serine 91–glutamate 151 is the S4 RNA-binding domain.

The protein belongs to the universal ribosomal protein uS4 family. As to quaternary structure, part of the 30S ribosomal subunit. Contacts protein S5. The interaction surface between S4 and S5 is involved in control of translational fidelity.

Functionally, one of the primary rRNA binding proteins, it binds directly to 16S rRNA where it nucleates assembly of the body of the 30S subunit. In terms of biological role, with S5 and S12 plays an important role in translational accuracy. The sequence is that of Small ribosomal subunit protein uS4 from Corynebacterium efficiens (strain DSM 44549 / YS-314 / AJ 12310 / JCM 11189 / NBRC 100395).